Here is a 380-residue protein sequence, read N- to C-terminus: Putative 8-amino-7-oxononanoate synthase (380 aa).

Arg-18 is a substrate binding site. 106-107 (GY) is a pyridoxal 5'-phosphate binding site. His-131 serves as a coordination point for substrate. Residues Ser-179, 205-208 (DEAH), and 236-239 (TFGK) each bind pyridoxal 5'-phosphate. Lys-239 carries the post-translational modification N6-(pyridoxal phosphate)lysine. Position 352 (Thr-352) interacts with substrate.

This sequence belongs to the class-II pyridoxal-phosphate-dependent aminotransferase family. BioF subfamily. In terms of assembly, homodimer. It depends on pyridoxal 5'-phosphate as a cofactor.

The enzyme catalyses 6-carboxyhexanoyl-[ACP] + L-alanine + H(+) = (8S)-8-amino-7-oxononanoate + holo-[ACP] + CO2. Its pathway is cofactor biosynthesis; biotin biosynthesis. Its function is as follows. Catalyzes the decarboxylative condensation of pimeloyl-[acyl-carrier protein] and L-alanine to produce 8-amino-7-oxononanoate (AON), [acyl-carrier protein], and carbon dioxide. The chain is Putative 8-amino-7-oxononanoate synthase (bioF) from Neisseria gonorrhoeae (strain ATCC 700825 / FA 1090).